Reading from the N-terminus, the 119-residue chain is Large ribosomal subunit protein uL14 (119 aa).

The protein belongs to the universal ribosomal protein uL14 family. In terms of assembly, part of the 50S ribosomal subunit. Forms a cluster with proteins L3 and L19. In the 70S ribosome, L14 and L19 interact and together make contacts with the 16S rRNA in bridges B5 and B8.

Its function is as follows. Binds to 23S rRNA. Forms part of two intersubunit bridges in the 70S ribosome. This Ehrlichia chaffeensis (strain ATCC CRL-10679 / Arkansas) protein is Large ribosomal subunit protein uL14.